We begin with the raw amino-acid sequence, 171 residues long: Peptidyl-prolyl cis-trans isomerase (171 aa).

Residues 7 to 170 (FFDLTIGGAP…KPVVIADCGQ (164 aa)) form the PPIase cyclophilin-type domain.

This sequence belongs to the cyclophilin-type PPIase family. As to expression, expressed in leaves, floral buds, growing shoots and stamens at anthesis.

It is found in the cytoplasm. The enzyme catalyses [protein]-peptidylproline (omega=180) = [protein]-peptidylproline (omega=0). With respect to regulation, binds cyclosporin A (CsA). CsA mediates some of its effects via an inhibitory action on PPIase. Functionally, PPIases accelerate the folding of proteins. It catalyzes the cis-trans isomerization of proline imidic peptide bonds in oligopeptides. The protein is Peptidyl-prolyl cis-trans isomerase of Solanum lycopersicum (Tomato).